The chain runs to 250 residues: 3-deoxy-manno-octulosonate cytidylyltransferase (250 aa).

The protein belongs to the KdsB family.

The protein localises to the cytoplasm. It catalyses the reaction 3-deoxy-alpha-D-manno-oct-2-ulosonate + CTP = CMP-3-deoxy-beta-D-manno-octulosonate + diphosphate. It participates in nucleotide-sugar biosynthesis; CMP-3-deoxy-D-manno-octulosonate biosynthesis; CMP-3-deoxy-D-manno-octulosonate from 3-deoxy-D-manno-octulosonate and CTP: step 1/1. It functions in the pathway bacterial outer membrane biogenesis; lipopolysaccharide biosynthesis. Its function is as follows. Activates KDO (a required 8-carbon sugar) for incorporation into bacterial lipopolysaccharide in Gram-negative bacteria. This Francisella tularensis subsp. novicida (strain U112) protein is 3-deoxy-manno-octulosonate cytidylyltransferase.